A 396-amino-acid polypeptide reads, in one-letter code: 8-amino-7-oxononanoate synthase (396 aa).

Arginine 21 provides a ligand contact to substrate. Pyridoxal 5'-phosphate is bound at residue 112-113 (GY). Histidine 137 contacts substrate. Pyridoxal 5'-phosphate is bound by residues serine 183, histidine 211, and threonine 239. The residue at position 242 (lysine 242) is an N6-(pyridoxal phosphate)lysine. Position 358 (threonine 358) interacts with substrate.

Belongs to the class-II pyridoxal-phosphate-dependent aminotransferase family. BioF subfamily. As to quaternary structure, homodimer. Pyridoxal 5'-phosphate serves as cofactor.

It catalyses the reaction 6-carboxyhexanoyl-[ACP] + L-alanine + H(+) = (8S)-8-amino-7-oxononanoate + holo-[ACP] + CO2. Its pathway is cofactor biosynthesis; biotin biosynthesis. In terms of biological role, catalyzes the decarboxylative condensation of pimeloyl-[acyl-carrier protein] and L-alanine to produce 8-amino-7-oxononanoate (AON), [acyl-carrier protein], and carbon dioxide. The protein is 8-amino-7-oxononanoate synthase of Bordetella petrii (strain ATCC BAA-461 / DSM 12804 / CCUG 43448).